A 168-amino-acid polypeptide reads, in one-letter code: MTRRREKAVQPVGTRRAAREFVFRVLFEADRGDLPLDTVFTRAEGAMREGDDTFPQLSADALTFANELVRGLEKHRADIDTTLRRTIRGWSFDQMAQTDLNVLRLATFELIYTAEPHPPVIESAVRIARKFGGDDSGRFVNGVLAGLSRSLQSAGVAKADEQADTAQD.

Belongs to the NusB family.

Its function is as follows. Involved in transcription antitermination. Required for transcription of ribosomal RNA (rRNA) genes. Binds specifically to the boxA antiterminator sequence of the ribosomal RNA (rrn) operons. In Deinococcus deserti (strain DSM 17065 / CIP 109153 / LMG 22923 / VCD115), this protein is Transcription antitermination protein NusB.